A 355-amino-acid polypeptide reads, in one-letter code: dTDP-D-glucose 4,6-dehydratase (355 aa).

Threonine 142 lines the substrate pocket. Aspartate 143 (proton donor) is an active-site residue. Active-site proton acceptor residues include glutamate 144 and tyrosine 166.

The protein belongs to the NAD(P)-dependent epimerase/dehydratase family. dTDP-glucose dehydratase subfamily. The cofactor is NAD(+).

It carries out the reaction dTDP-alpha-D-glucose = dTDP-4-dehydro-6-deoxy-alpha-D-glucose + H2O. The sequence is that of dTDP-D-glucose 4,6-dehydratase (Tgds) from Mus musculus (Mouse).